Reading from the N-terminus, the 535-residue chain is T-complex protein 1 subunit zeta 2 (535 aa).

Belongs to the TCP-1 chaperonin family. In terms of assembly, heterooligomeric complex of about 850 to 900 kDa that forms two stacked rings, 12 to 16 nm in diameter.

The protein resides in the cytoplasm. Functionally, molecular chaperone; assists the folding of proteins upon ATP hydrolysis. Known to play a role, in vitro, in the folding of actin and tubulin. The protein is T-complex protein 1 subunit zeta 2 of Arabidopsis thaliana (Mouse-ear cress).